Here is a 179-residue protein sequence, read N- to C-terminus: Cell division protein ZapC (179 aa).

This sequence belongs to the ZapC family. Interacts directly with FtsZ.

Its subcellular location is the cytoplasm. In terms of biological role, contributes to the efficiency of the cell division process by stabilizing the polymeric form of the cell division protein FtsZ. Acts by promoting interactions between FtsZ protofilaments and suppressing the GTPase activity of FtsZ. This is Cell division protein ZapC from Ferrimonas balearica (strain DSM 9799 / CCM 4581 / KCTC 23876 / PAT).